The sequence spans 145 residues: D-aminoacyl-tRNA deacylase (145 aa).

Residues 137–138 (GP) carry the Gly-cisPro motif, important for rejection of L-amino acids motif.

This sequence belongs to the DTD family. In terms of assembly, homodimer.

It localises to the cytoplasm. The enzyme catalyses glycyl-tRNA(Ala) + H2O = tRNA(Ala) + glycine + H(+). It catalyses the reaction a D-aminoacyl-tRNA + H2O = a tRNA + a D-alpha-amino acid + H(+). Its function is as follows. An aminoacyl-tRNA editing enzyme that deacylates mischarged D-aminoacyl-tRNAs. Also deacylates mischarged glycyl-tRNA(Ala), protecting cells against glycine mischarging by AlaRS. Acts via tRNA-based rather than protein-based catalysis; rejects L-amino acids rather than detecting D-amino acids in the active site. By recycling D-aminoacyl-tRNA to D-amino acids and free tRNA molecules, this enzyme counteracts the toxicity associated with the formation of D-aminoacyl-tRNA entities in vivo and helps enforce protein L-homochirality. The sequence is that of D-aminoacyl-tRNA deacylase from Psychromonas ingrahamii (strain DSM 17664 / CCUG 51855 / 37).